The sequence spans 143 residues: Nucleoside diphosphate kinase (143 aa).

The ATP site is built by K11, F59, R87, T93, R104, and N114. H117 (pros-phosphohistidine intermediate) is an active-site residue.

Belongs to the NDK family. In terms of assembly, homotetramer. Mg(2+) is required as a cofactor.

Its subcellular location is the cytoplasm. It carries out the reaction dZDP + ATP = dZTP + ADP. It catalyses the reaction a 2'-deoxyribonucleoside 5'-diphosphate + ATP = a 2'-deoxyribonucleoside 5'-triphosphate + ADP. The enzyme catalyses a ribonucleoside 5'-diphosphate + ATP = a ribonucleoside 5'-triphosphate + ADP. It functions in the pathway purine metabolism. Its function is as follows. Major role in the synthesis of nucleoside triphosphates other than ATP. The ATP gamma phosphate is transferred to the NDP beta phosphate via a ping-pong mechanism, using a phosphorylated active-site intermediate. (Microbial infection) Catalyzes the phosphorylation of dZDP to dZTP, when the bacterium is infected by a phage that produces the substrate for the synthesis of dZTP (2- amino-2'-deoxyadenosine 5'-triphosphate), which is then used by the phage as a DNA polymerase substrate. This chain is Nucleoside diphosphate kinase, found in Acinetobacter baumannii (strain AB307-0294).